The sequence spans 702 residues: DnaJ homolog subfamily C member 14 (702 aa).

Disordered regions lie at residues 1-148 and 165-229; these read MAQK…GGNG and DELE…KRSQ. Pro residues predominate over residues 75-84; it reads HGPPGGPGPP. Residues 88-103 are compositionally biased toward acidic residues; that stretch reads EDPDQSETSSEEESGV. Polar residues predominate over residues 113-133; that stretch reads TGNQKDGNSFLSIPSACNCQG. Over residues 165–175 the composition is skewed to acidic residues; that stretch reads DELEEEYDDEE. Basic residues predominate over residues 192-201; that stretch reads PPSRRQRHRF. Residues 202–217 are compositionally biased toward basic and acidic residues; it reads PTKEDTREGGRRDPRS. Residues 218–227 are compositionally biased toward basic residues; sequence PGRHRLGRKR. Transmembrane regions (helical) follow at residues 250-270, 300-320, and 326-346; these read AGFW…ETCG, GWAQ…VGLF, and LLGA…QLGW. The J domain occupies 443-507; the sequence is NPFHVLGVEA…EKRKEYEMKR (65 aa). The tract at residues 658–702 is disordered; that stretch reads MPNGNFFAAPQPAPGAAAASKPNSTVPKGEAKPKRRKKVRRPFQR. Residues 659-676 show a composition bias toward low complexity; sequence PNGNFFAAPQPAPGAAAA. Basic residues predominate over residues 690-702; the sequence is PKRRKKVRRPFQR.

As to quaternary structure, interacts with the FxxxFxxxF motif of DRD1 via its C-terminal domain. In terms of tissue distribution, highly expressed in pancreas and selectively expressed in brain, lung, liver, skeletal muscle and kidney.

The protein resides in the endoplasmic reticulum membrane. Functionally, regulates the export of target proteins, such as DRD1, from the endoplasmic reticulum to the cell surface. The protein is DnaJ homolog subfamily C member 14 (DNAJC14) of Homo sapiens (Human).